Reading from the N-terminus, the 232-residue chain is Phosphatidylserine decarboxylase proenzyme (232 aa).

The active-site Schiff-base intermediate with substrate; via pyruvic acid is the Ser190. Position 190 is a pyruvic acid (Ser); by autocatalysis (Ser190).

Belongs to the phosphatidylserine decarboxylase family. PSD-A subfamily. Heterodimer of a large membrane-associated beta subunit and a small pyruvoyl-containing alpha subunit. The cofactor is pyruvate. Is synthesized initially as an inactive proenzyme. Formation of the active enzyme involves a self-maturation process in which the active site pyruvoyl group is generated from an internal serine residue via an autocatalytic post-translational modification. Two non-identical subunits are generated from the proenzyme in this reaction, and the pyruvate is formed at the N-terminus of the alpha chain, which is derived from the carboxyl end of the proenzyme. The post-translation cleavage follows an unusual pathway, termed non-hydrolytic serinolysis, in which the side chain hydroxyl group of the serine supplies its oxygen atom to form the C-terminus of the beta chain, while the remainder of the serine residue undergoes an oxidative deamination to produce ammonia and the pyruvoyl prosthetic group on the alpha chain.

The protein localises to the cell membrane. The enzyme catalyses a 1,2-diacyl-sn-glycero-3-phospho-L-serine + H(+) = a 1,2-diacyl-sn-glycero-3-phosphoethanolamine + CO2. The protein operates within phospholipid metabolism; phosphatidylethanolamine biosynthesis; phosphatidylethanolamine from CDP-diacylglycerol: step 2/2. Its function is as follows. Catalyzes the formation of phosphatidylethanolamine (PtdEtn) from phosphatidylserine (PtdSer). The sequence is that of Phosphatidylserine decarboxylase proenzyme from Rhizobium etli (strain CIAT 652).